The sequence spans 472 residues: Protein translocase subunit SecD (472 aa).

A run of 6 helical transmembrane segments spans residues 7–27 (LLLLIVVLVIGASFVLVKLPL), 298–318 (LVAGFVGLVLVLVFMAVYYRL), 326–345 (SLMIYAVLTLAAFALVGVTL), 349–368 (GIAGFILSIGMAVDANVLIF), 392–414 (AFSSILDSNVTTLIACAALFWFG), and 432–452 (SLFTALTCSRTLLLVIVLSLP).

Belongs to the SecD/SecF family. SecD subfamily. As to quaternary structure, forms a complex with SecF. Part of the essential Sec protein translocation apparatus which comprises SecA, SecYEG and auxiliary proteins SecDF. Other proteins may also be involved.

It is found in the cell inner membrane. Functionally, part of the Sec protein translocase complex. Interacts with the SecYEG preprotein conducting channel. SecDF uses the proton motive force (PMF) to complete protein translocation after the ATP-dependent function of SecA. Probably participates in protein translocation into and across both the cytoplasmic and thylakoid membranes in cyanobacterial cells. The chain is Protein translocase subunit SecD from Synechocystis sp. (strain ATCC 27184 / PCC 6803 / Kazusa).